Here is a 423-residue protein sequence, read N- to C-terminus: Glucuronoxylanase XynC (423 aa).

An N-terminal signal peptide occupies residues 1-33 (MMSSVKKTICVLLVCFTMMSVMLLGPGVTEVSA). Residue glutamate 172 is the Proton donor of the active site. Glutamate 261 (nucleophile) is an active-site residue.

It belongs to the glycosyl hydrolase 30 family.

The protein resides in the secreted. It catalyses the reaction Endohydrolysis of (1-&gt;4)-beta-D-xylosyl links in some glucuronoarabinoxylans.. It functions in the pathway glycan degradation; xylan degradation. In terms of biological role, catalyzes the depolymerization of methylglucuronoxylan (MeGAXn). It cleaves the beta-1,4-xylosidic bond penultimate to that linking carbon one of the xylose residue substituted with alpha-1,2-linked 4-O-methyl-D-glucuronate (MeGA). The chain is Glucuronoxylanase XynC (xynC) from Bacillus subtilis.